The sequence spans 154 residues: Myoglobin (154 aa).

The region spanning 2–148 (GLSDGEWHLV…FRNDIAAKIK (147 aa)) is the Globin domain. At serine 4 the chain carries Phosphoserine. Histidine 65 is a nitrite binding site. Histidine 65 serves as a coordination point for O2. Threonine 68 carries the post-translational modification Phosphothreonine. Histidine 94 provides a ligand contact to heme b.

The protein belongs to the globin family. As to quaternary structure, monomeric.

It localises to the cytoplasm. It is found in the sarcoplasm. The enzyme catalyses Fe(III)-heme b-[protein] + nitric oxide + H2O = Fe(II)-heme b-[protein] + nitrite + 2 H(+). The catalysed reaction is H2O2 + AH2 = A + 2 H2O. Functionally, monomeric heme protein which primary function is to store oxygen and facilitate its diffusion within muscle tissues. Reversibly binds oxygen through a pentacoordinated heme iron and enables its timely and efficient release as needed during periods of heightened demand. Depending on the oxidative conditions of tissues and cells, and in addition to its ability to bind oxygen, it also has a nitrite reductase activity whereby it regulates the production of bioactive nitric oxide. Under stress conditions, like hypoxia and anoxia, it also protects cells against reactive oxygen species thanks to its pseudoperoxidase activity. This Pusa sibirica (Baikal seal) protein is Myoglobin (MB).